The chain runs to 386 residues: Trichocyst matrix protein T2-A (386 aa).

Residues 1 to 19 form the signal peptide; it reads MKTVILALALIVLASSTQA. Residues 20–48 constitute a propeptide that is removed on maturation; sequence DVIATIKKIDQSPFGRTLFDTIYLELQTG. A coiled-coil region spans residues 51 to 154; the sequence is LDRLLSTLTD…AEEHEDFEEK (104 aa). A propeptide spanning residues 184–238 is cleaved from the precursor; it reads KGKATKQTHKFTKEVASMIQKHFTTSAKKTAKFQHRKGYSKLFKAFATIASKVEQ. Positions 293–332 form a coiled coil; the sequence is SALANATSDLASLNDIIAQVEASLDTTEQRIENVSADRHD.

This sequence belongs to the TMP family.

It localises to the trichocyst. In terms of biological role, structural protein that crystallize inside the trichocyst matrix. This is Trichocyst matrix protein T2-A (T2A) from Paramecium tetraurelia.